The sequence spans 171 residues: S-ribosylhomocysteine lyase (171 aa).

Fe cation-binding residues include His54, His58, and Cys128.

This sequence belongs to the LuxS family. As to quaternary structure, homodimer. It depends on Fe cation as a cofactor.

It catalyses the reaction S-(5-deoxy-D-ribos-5-yl)-L-homocysteine = (S)-4,5-dihydroxypentane-2,3-dione + L-homocysteine. Its function is as follows. Involved in the synthesis of autoinducer 2 (AI-2) which is secreted by bacteria and is used to communicate both the cell density and the metabolic potential of the environment. The regulation of gene expression in response to changes in cell density is called quorum sensing. Catalyzes the transformation of S-ribosylhomocysteine (RHC) to homocysteine (HC) and 4,5-dihydroxy-2,3-pentadione (DPD). This Shigella boydii serotype 4 (strain Sb227) protein is S-ribosylhomocysteine lyase.